The following is a 1222-amino-acid chain: ATP-dependent helicase/nuclease subunit A (1222 aa).

One can recognise a UvrD-like helicase ATP-binding domain in the interval 39-495; the sequence is QKRTAQQIEA…ILLKENFRSQ (457 aa). 60–67 contributes to the ATP binding site; that stretch reads ASAGSGKT. The UvrD-like helicase C-terminal domain occupies 524-810; sequence QLIAGSHAQT…NLMTIHKSKG (287 aa).

The protein belongs to the helicase family. AddA subfamily. In terms of assembly, heterodimer of AddA and AddB/RexB. Requires Mg(2+) as cofactor.

The catalysed reaction is Couples ATP hydrolysis with the unwinding of duplex DNA by translocating in the 3'-5' direction.. The enzyme catalyses ATP + H2O = ADP + phosphate + H(+). The heterodimer acts as both an ATP-dependent DNA helicase and an ATP-dependent, dual-direction single-stranded exonuclease. Recognizes the chi site generating a DNA molecule suitable for the initiation of homologous recombination. The AddA nuclease domain is required for chi fragment generation; this subunit has the helicase and 3' -&gt; 5' nuclease activities. This Streptococcus pyogenes serotype M2 (strain MGAS10270) protein is ATP-dependent helicase/nuclease subunit A.